Consider the following 250-residue polypeptide: NAD-dependent protein deacetylase (250 aa).

Residues 1-244 (MECDKVGDLL…PCVVDYIKSQ (244 aa)) form the Deacetylase sirtuin-type domain. 8 residues coordinate NAD(+): Ala-22, Thr-26, Phe-33, Arg-34, Gln-98, Ile-100, Asp-101, and His-116. Position 33 (Phe-33) interacts with nicotinamide. Residues Ile-100 and Asp-101 each coordinate nicotinamide. Catalysis depends on His-116, which acts as the Proton acceptor. Zn(2+)-binding residues include Cys-124, Cys-127, Cys-149, and Cys-151. NAD(+) is bound by residues Ser-187, Ser-188, Asn-212, and Val-230.

The protein belongs to the sirtuin family. Class U subfamily. The cofactor is Zn(2+).

The protein resides in the cytoplasm. The enzyme catalyses N(6)-acetyl-L-lysyl-[protein] + NAD(+) + H2O = 2''-O-acetyl-ADP-D-ribose + nicotinamide + L-lysyl-[protein]. NAD-dependent protein deacetylase which modulates the activities of several enzymes which are inactive in their acetylated form. Deacetylates the N-terminal lysine residue of Alba, the major archaeal chromatin protein and that, in turn, increases Alba's DNA binding affinity, thereby repressing transcription. The sequence is that of NAD-dependent protein deacetylase from Sulfurisphaera tokodaii (strain DSM 16993 / JCM 10545 / NBRC 100140 / 7) (Sulfolobus tokodaii).